Here is a 464-residue protein sequence, read N- to C-terminus: Protein FAM90A9 (464 aa).

Disordered regions lie at residues 1–42, 70–389, and 411–437; these read MMAR…DPRL, PATL…HDGA, and APSF…SEAP. Composition is skewed to basic and acidic residues over residues 74–89 and 97–114; these read GKKE…KPRV and NKDK…DPQR. Residues 180–197 are compositionally biased toward low complexity; the sequence is LASLSPLRKASLSSSSSL.

This sequence belongs to the FAM90 family.

This chain is Protein FAM90A9 (FAM90A9), found in Homo sapiens (Human).